Here is a 529-residue protein sequence, read N- to C-terminus: Interleukin-21 receptor (529 aa).

An N-terminal signal peptide occupies residues 1 to 19; that stretch reads MPRGPVAALLLLILHGAWS. 3 disulfides stabilise this stretch: C20-C109, C25-C35, and C65-C81. Residues 20 to 237 lie on the Extracellular side of the membrane; sequence CLDLTCYTDY…GEPEAGWDPH (218 aa). 2 Fibronectin type-III domains span residues 21–118 and 119–228; these read LDLT…AESI and KPAP…TQAG. N-linked (GlcNAc...) asparagine glycosylation is found at N73, N97, N104, N125, and N182. Residue W214 is glycosylated (C-linked (Man) tryptophan). The short motif at 214 to 218 is the WSXWS motif element; sequence WSEWS. The helical transmembrane segment at 238 to 258 threads the bilayer; the sequence is MLLLLAVLIIVLVFMGLKIHL. Residues 259 to 529 are Cytoplasmic-facing; sequence PWRLWKKIWA…PPVDSGAQSS (271 aa). A Box 1 motif motif is present at residues 266–274; that stretch reads IWAPVPTPE. A disordered region spans residues 458 to 529; sequence TADPTWRTGS…PPVDSGAQSS (72 aa).

Belongs to the type I cytokine receptor family. Type 4 subfamily. In terms of assembly, heterodimer with the common gamma subunit. Associates with JAK1. C-mannosylated at Trp-214 in the WSXWS motif, the sugar chain makes extensive hydrogen bonds with Asn-73 sugar, and bridges the two fibronectin domains transforming the V-shaped receptor into an A-frame. As to expression, selectively expressed in lymphoid tissues. Most highly expressed in thymus and spleen.

It is found in the membrane. In terms of biological role, this is a receptor for interleukin-21. The sequence is that of Interleukin-21 receptor (Il21r) from Mus musculus (Mouse).